The sequence spans 256 residues: MALAKRIIPCLDVDNGRVVKGVKFENIRDAGDPVEIARRYDEQGADEITFLDITASVDGRDTTLHTVERMASQVFIPLTVGGGVRTVQDIRNLLNAGADKVSINTAAVFNPEFVGEAADRFGSQCIVVAIDAKKVSGPGEAPRWEIFTHGGRKPTGLDAVEWAKKMEGLGAGEILLTSMDQDGMKNGFDLGVTRAISDALGIPVIASGGVGNLQHLADGILEGHASAVLAASIFHFGEYTVPEAKAYMASRGIVVR.

Catalysis depends on residues Asp12 and Asp131.

It belongs to the HisA/HisF family. As to quaternary structure, heterodimer of HisH and HisF.

The protein resides in the cytoplasm. It catalyses the reaction 5-[(5-phospho-1-deoxy-D-ribulos-1-ylimino)methylamino]-1-(5-phospho-beta-D-ribosyl)imidazole-4-carboxamide + L-glutamine = D-erythro-1-(imidazol-4-yl)glycerol 3-phosphate + 5-amino-1-(5-phospho-beta-D-ribosyl)imidazole-4-carboxamide + L-glutamate + H(+). It participates in amino-acid biosynthesis; L-histidine biosynthesis; L-histidine from 5-phospho-alpha-D-ribose 1-diphosphate: step 5/9. IGPS catalyzes the conversion of PRFAR and glutamine to IGP, AICAR and glutamate. The HisF subunit catalyzes the cyclization activity that produces IGP and AICAR from PRFAR using the ammonia provided by the HisH subunit. The protein is Imidazole glycerol phosphate synthase subunit HisF of Pseudomonas putida (strain ATCC 700007 / DSM 6899 / JCM 31910 / BCRC 17059 / LMG 24140 / F1).